The following is a 325-amino-acid chain: Endo-1,4-beta-xylanase 2 (325 aa).

An N-terminal signal peptide occupies residues 1-18 (MLYTSIFAAAMAASGAMA). Residues 26–325 (ASNCTTLDSF…KAAVKAIMAI (300 aa)) form the GH10 domain. Residue Asn-28 is glycosylated (N-linked (GlcNAc...) asparagine). Glu-157 functions as the Proton donor in the catalytic mechanism. The Nucleophile role is filled by Glu-262. Residues Cys-280 and Cys-286 are joined by a disulfide bond.

Belongs to the glycosyl hydrolase 10 (cellulase F) family.

It is found in the secreted. The enzyme catalyses Endohydrolysis of (1-&gt;4)-beta-D-xylosidic linkages in xylans.. It functions in the pathway glycan degradation; xylan degradation. In terms of biological role, endo-1,4-beta-xylanase involved in the hydrolysis of xylan, a major structural heterogeneous polysaccharide found in plant biomass representing the second most abundant polysaccharide in the biosphere, after cellulose. The protein is Endo-1,4-beta-xylanase 2 (xyl2) of Claviceps purpurea (Ergot fungus).